The chain runs to 350 residues: S-adenosylmethionine:tRNA ribosyltransferase-isomerase (350 aa).

Belongs to the QueA family. Monomer.

It is found in the cytoplasm. The catalysed reaction is 7-aminomethyl-7-carbaguanosine(34) in tRNA + S-adenosyl-L-methionine = epoxyqueuosine(34) in tRNA + adenine + L-methionine + 2 H(+). The protein operates within tRNA modification; tRNA-queuosine biosynthesis. Transfers and isomerizes the ribose moiety from AdoMet to the 7-aminomethyl group of 7-deazaguanine (preQ1-tRNA) to give epoxyqueuosine (oQ-tRNA). This Bacillus cereus (strain B4264) protein is S-adenosylmethionine:tRNA ribosyltransferase-isomerase.